The following is a 134-amino-acid chain: ATP synthase epsilon chain (134 aa).

It belongs to the ATPase epsilon chain family. F-type ATPases have 2 components, CF(1) - the catalytic core - and CF(0) - the membrane proton channel. CF(1) has five subunits: alpha(3), beta(3), gamma(1), delta(1), epsilon(1). CF(0) has three main subunits: a, b and c.

It localises to the cell membrane. Functionally, produces ATP from ADP in the presence of a proton gradient across the membrane. This is ATP synthase epsilon chain from Listeria welshimeri serovar 6b (strain ATCC 35897 / DSM 20650 / CCUG 15529 / CIP 8149 / NCTC 11857 / SLCC 5334 / V8).